The chain runs to 78 residues: UPF0154 protein SSU98_1719 (78 aa).

A helical transmembrane segment spans residues 3-23 (LGLAILLIVLAFAGGVALGIY).

The protein belongs to the UPF0154 family.

Its subcellular location is the cell membrane. The polypeptide is UPF0154 protein SSU98_1719 (Streptococcus suis (strain 98HAH33)).